A 426-amino-acid polypeptide reads, in one-letter code: Anhydromevalonate phosphate decarboxylase (426 aa).

Residues Asn-148 and Glu-211 each coordinate Mn(2+). Catalysis depends on Asp-255, which acts as the Proton acceptor.

Belongs to the UbiD family. It depends on prenylated FMN as a cofactor. The cofactor is Mn(2+).

It carries out the reaction (2E)-3-methyl-5-phosphooxypent-2-enoate + H(+) = isopentenyl phosphate + CO2. Its pathway is isoprenoid biosynthesis; isopentenyl diphosphate biosynthesis via mevalonate pathway. In terms of biological role, catalyzes the conversion of trans-anhydromevalonate 5-phosphate (tAHMP) into isopentenyl phosphate. Involved in the archaeal mevalonate (MVA) pathway, which provides fundamental precursors for isoprenoid biosynthesis, such as isopentenyl diphosphate (IPP) and dimethylallyl diphosphate (DMAPP). This is Anhydromevalonate phosphate decarboxylase from Archaeoglobus fulgidus (strain ATCC 49558 / DSM 4304 / JCM 9628 / NBRC 100126 / VC-16).